Consider the following 477-residue polypeptide: Probable periplasmic serine endoprotease DegP-like (477 aa).

A signal peptide spans 1 to 27 (MSIPRLKSYLMMFAAVLMLGQVLTAQA). Residues H117, D147, and S220 each act as charge relay system in the active site. Substrate contacts are provided by residues 218 to 220 (GNS) and 275 to 279 (LGVVI). PDZ domains follow at residues 264-355 (LKKD…IRNG) and 361-466 (DISV…LRQG).

The protein belongs to the peptidase S1C family.

It localises to the periplasm. It catalyses the reaction Acts on substrates that are at least partially unfolded. The cleavage site P1 residue is normally between a pair of hydrophobic residues, such as Val-|-Val.. Its function is as follows. Might be efficient in the degradation of transiently denatured and unfolded proteins which accumulate in the periplasm following stress conditions. This Pseudomonas putida (strain ATCC 700007 / DSM 6899 / JCM 31910 / BCRC 17059 / LMG 24140 / F1) protein is Probable periplasmic serine endoprotease DegP-like.